The chain runs to 610 residues: Serine/threonine-protein kinase RCK2 (610 aa).

2 disordered regions span residues 1 to 55 (MLKI…QDKN) and 99 to 127 (TSVPAIDVHESSEGQLSSDPLISDESLSE). The span at 11 to 24 (KKPDQADLSQESKK) shows a compositional bias: basic and acidic residues. The span at 31-55 (RSSGTNNKDVSQITSSPKKSFQDKN) shows a compositional bias: polar residues. A phosphoserine mark is found at serine 46 and serine 50. One can recognise a Protein kinase domain in the interval 163–478 (YKLINKIGEG…IDQFLDDPWL (316 aa)). Position 169–177 (169–177 (IGEGAFSKV)) interacts with ATP. Serine 187 is subject to Phosphoserine. Lysine 201 is a binding site for ATP. The active-site Proton acceptor is aspartate 313. Phosphothreonine is present on threonine 350. The interval 493-506 (KKAGTSERRHPHKK) is calmodulin-binding. At serine 520 the chain carries Phosphoserine. Positions 541 to 564 (EDRMGTRGGLGSLAEDEELEDSYS) are disordered.

The protein belongs to the protein kinase superfamily. CAMK Ser/Thr protein kinase family. CaMK subfamily. Autophosphorylated. Phosphorylated by HOG1 at Ser-520 after osmotic stress.

The protein resides in the cytoplasm. It carries out the reaction L-seryl-[protein] + ATP = O-phospho-L-seryl-[protein] + ADP + H(+). It catalyses the reaction L-threonyl-[protein] + ATP = O-phospho-L-threonyl-[protein] + ADP + H(+). With respect to regulation, activated by Ser-520 phosphorylation by HOG1. Functionally, serine/threonine-protein kinase involved in a signal transduction pathway that is activated by changes in the osmolarity of the extracellular environment. This is Serine/threonine-protein kinase RCK2 (RCK2) from Saccharomyces cerevisiae (strain ATCC 204508 / S288c) (Baker's yeast).